The following is a 203-amino-acid chain: Imidazoleglycerol-phosphate dehydratase (203 aa).

The protein belongs to the imidazoleglycerol-phosphate dehydratase family.

The protein localises to the cytoplasm. It carries out the reaction D-erythro-1-(imidazol-4-yl)glycerol 3-phosphate = 3-(imidazol-4-yl)-2-oxopropyl phosphate + H2O. It participates in amino-acid biosynthesis; L-histidine biosynthesis; L-histidine from 5-phospho-alpha-D-ribose 1-diphosphate: step 6/9. The chain is Imidazoleglycerol-phosphate dehydratase from Deinococcus geothermalis (strain DSM 11300 / CIP 105573 / AG-3a).